Consider the following 318-residue polypeptide: Aspartate carbamoyltransferase catalytic subunit (318 aa).

Carbamoyl phosphate is bound by residues arginine 55 and threonine 56. Position 83 (lysine 83) interacts with L-aspartate. The carbamoyl phosphate site is built by arginine 105, histidine 138, and glutamine 141. 2 residues coordinate L-aspartate: arginine 171 and arginine 225. Residues glycine 266 and proline 267 each contribute to the carbamoyl phosphate site.

This sequence belongs to the aspartate/ornithine carbamoyltransferase superfamily. ATCase family. Heterododecamer (2C3:3R2) of six catalytic PyrB chains organized as two trimers (C3), and six regulatory PyrI chains organized as three dimers (R2).

The enzyme catalyses carbamoyl phosphate + L-aspartate = N-carbamoyl-L-aspartate + phosphate + H(+). It functions in the pathway pyrimidine metabolism; UMP biosynthesis via de novo pathway; (S)-dihydroorotate from bicarbonate: step 2/3. Catalyzes the condensation of carbamoyl phosphate and aspartate to form carbamoyl aspartate and inorganic phosphate, the committed step in the de novo pyrimidine nucleotide biosynthesis pathway. This chain is Aspartate carbamoyltransferase catalytic subunit, found in Corynebacterium kroppenstedtii (strain DSM 44385 / JCM 11950 / CIP 105744 / CCUG 35717).